A 282-amino-acid chain; its full sequence is Pantothenate synthetase (282 aa).

29-36 (MGFLHEGH) lines the ATP pocket. Catalysis depends on histidine 36, which acts as the Proton donor. Glutamine 60 contacts (R)-pantoate. Glutamine 60 contacts beta-alanine. 146-149 (GEKD) provides a ligand contact to ATP. A (R)-pantoate-binding site is contributed by glutamine 152. Residues isoleucine 175 and 183–186 (KSSR) each bind ATP.

The protein belongs to the pantothenate synthetase family. In terms of assembly, homodimer.

It is found in the cytoplasm. It carries out the reaction (R)-pantoate + beta-alanine + ATP = (R)-pantothenate + AMP + diphosphate + H(+). The protein operates within cofactor biosynthesis; (R)-pantothenate biosynthesis; (R)-pantothenate from (R)-pantoate and beta-alanine: step 1/1. Functionally, catalyzes the condensation of pantoate with beta-alanine in an ATP-dependent reaction via a pantoyl-adenylate intermediate. In Clostridioides difficile (strain 630) (Peptoclostridium difficile), this protein is Pantothenate synthetase.